A 465-amino-acid polypeptide reads, in one-letter code: Phosphatidylserine synthase 1 (465 aa).

Over 1 to 35 the chain is Cytoplasmic; the sequence is MATTFRSQTLSKDDVNYRMHFRMINEQQVEDITIQ. Residues 36–56 traverse the membrane as a helical segment; sequence FFYKPHTISLLTVTVLSLMYF. Topologically, residues 57-70 are lumenal; sequence AFTRDDGDPDSNLR. The helical transmembrane segment at 71–91 threads the bilayer; sequence VGLILLVSFFLVISVLAFPNG. At 92–102 the chain is on the cytoplasmic side; it reads PFTRPHPAIWR. A helical transmembrane segment spans residues 103–123; it reads IVFGLSVLYFLFLVFIIFLNW. Residues 124–286 are Lumenal-facing; sequence DQVKALMFWL…WLDPKSSLQR (163 aa). The helical transmembrane segment at 287–307 threads the bilayer; the sequence is VMGVYLFMIIWQLTELNTFFL. The Cytoplasmic portion of the chain corresponds to 308–309; it reads KH. The chain crosses the membrane as a helical span at residues 310–330; it reads IFVFPACHALSWCRILFIGII. At 331–355 the chain is on the lumenal side; it reads TAPTVRQYYAYLTDTQCKRVGTQCW. A helical membrane pass occupies residues 356–376; that stretch reads VFGAIAFLEALACIKFGQDLF. The Cytoplasmic portion of the chain corresponds to 377-380; it reads SKTQ. Residues 381–401 traverse the membrane as a helical segment; it reads ILYVILWLVCLAFITFLCLYV. Over 402 to 465 the chain is Lumenal; sequence MVWYAENYGP…DSRTINGMEK (64 aa). The tract at residues 446–465 is disordered; sequence CSTRKRRDSGDSRTINGMEK.

It belongs to the phosphatidyl serine synthase family.

It is found in the endoplasmic reticulum membrane. It catalyses the reaction a 1,2-diacyl-sn-glycero-3-phosphoethanolamine + L-serine = a 1,2-diacyl-sn-glycero-3-phospho-L-serine + ethanolamine. The enzyme catalyses a 1,2-diacyl-sn-glycero-3-phosphocholine + L-serine = a 1,2-diacyl-sn-glycero-3-phospho-L-serine + choline. It participates in phospholipid metabolism; phosphatidylserine biosynthesis. Catalyzes a base-exchange reaction in which the polar head group of phosphatidylethanolamine (PE) or phosphatidylcholine (PC) is replaced by L-serine. Catalyzes mainly the conversion of phosphatidylcholine but also converts, in vitro and to a lesser extent, phosphatidylethanolamine. In Danio rerio (Zebrafish), this protein is Phosphatidylserine synthase 1 (ptdss1).